We begin with the raw amino-acid sequence, 383 residues long: tRNA-specific 2-thiouridylase MnmA (383 aa).

Residues 9–16 and Met35 each bind ATP; that span reads GMSGGVDS. The segment at 95-97 is interaction with target base in tRNA; the sequence is NPD. Cys100 functions as the Nucleophile in the catalytic mechanism. The cysteines at positions 100 and 196 are disulfide-linked. Gly124 provides a ligand contact to ATP. The interval 146-148 is interaction with tRNA; that stretch reads KDQ. The active-site Cysteine persulfide intermediate is the Cys196. An interaction with tRNA region spans residues 308-309; that stretch reads RY.

The protein belongs to the MnmA/TRMU family.

It localises to the cytoplasm. It carries out the reaction S-sulfanyl-L-cysteinyl-[protein] + uridine(34) in tRNA + AH2 + ATP = 2-thiouridine(34) in tRNA + L-cysteinyl-[protein] + A + AMP + diphosphate + H(+). Its function is as follows. Catalyzes the 2-thiolation of uridine at the wobble position (U34) of tRNA, leading to the formation of s(2)U34. The chain is tRNA-specific 2-thiouridylase MnmA from Burkholderia pseudomallei (strain 668).